The following is an 81-amino-acid chain: Large ribosomal subunit protein bL31B (81 aa).

The protein belongs to the bacterial ribosomal protein bL31 family. Type B subfamily. In terms of assembly, part of the 50S ribosomal subunit.

The chain is Large ribosomal subunit protein bL31B from Lactobacillus acidophilus (strain ATCC 700396 / NCK56 / N2 / NCFM).